The chain runs to 245 residues: 1-(5-phosphoribosyl)-5-[(5-phosphoribosylamino)methylideneamino] imidazole-4-carboxamide isomerase (245 aa).

The active-site Proton acceptor is the Asp7. Asp129 (proton donor) is an active-site residue.

Belongs to the HisA/HisF family.

The protein resides in the cytoplasm. The catalysed reaction is 1-(5-phospho-beta-D-ribosyl)-5-[(5-phospho-beta-D-ribosylamino)methylideneamino]imidazole-4-carboxamide = 5-[(5-phospho-1-deoxy-D-ribulos-1-ylimino)methylamino]-1-(5-phospho-beta-D-ribosyl)imidazole-4-carboxamide. Its pathway is amino-acid biosynthesis; L-histidine biosynthesis; L-histidine from 5-phospho-alpha-D-ribose 1-diphosphate: step 4/9. This Escherichia fergusonii (strain ATCC 35469 / DSM 13698 / CCUG 18766 / IAM 14443 / JCM 21226 / LMG 7866 / NBRC 102419 / NCTC 12128 / CDC 0568-73) protein is 1-(5-phosphoribosyl)-5-[(5-phosphoribosylamino)methylideneamino] imidazole-4-carboxamide isomerase.